We begin with the raw amino-acid sequence, 262 residues long: Hydroxyethylthiazole kinase (262 aa).

M50 contacts substrate. The ATP site is built by R125 and T171. A substrate-binding site is contributed by G198.

Belongs to the Thz kinase family. The cofactor is Mg(2+).

The enzyme catalyses 5-(2-hydroxyethyl)-4-methylthiazole + ATP = 4-methyl-5-(2-phosphooxyethyl)-thiazole + ADP + H(+). It functions in the pathway cofactor biosynthesis; thiamine diphosphate biosynthesis; 4-methyl-5-(2-phosphoethyl)-thiazole from 5-(2-hydroxyethyl)-4-methylthiazole: step 1/1. In terms of biological role, catalyzes the phosphorylation of the hydroxyl group of 4-methyl-5-beta-hydroxyethylthiazole (THZ). In Escherichia coli O157:H7, this protein is Hydroxyethylthiazole kinase.